Reading from the N-terminus, the 956-residue chain is ATPase 11, plasma membrane-type (956 aa).

The Cytoplasmic portion of the chain corresponds to 1-65; that stretch reads MGDKEEVLEA…EKKESKFLKF (65 aa). The chain crosses the membrane as a helical span at residues 66–85; that stretch reads LGFMWNPLSWVMEAAAIMAI. Residues 86–97 are Extracellular-facing; that stretch reads ALANGGGKPPDW. A helical membrane pass occupies residues 98–118; the sequence is QDFVGIITLLVINSTISFIEE. Residues 119 to 247 lie on the Cytoplasmic side of the membrane; it reads NNAGNAAAAL…GHFQQVLTAI (129 aa). A helical transmembrane segment spans residues 248–268; that stretch reads GNFCICSIAVGMIIEIVVMYP. Over 269–277 the chain is Extracellular; the sequence is IQHRAYRPG. The helical transmembrane segment at 278–295 threads the bilayer; the sequence is IDNLLVLLIGGIPIAMPT. Topologically, residues 296–647 are cytoplasmic; it reads VLSVTMAIGS…TSRAIFQRMK (352 aa). Residue Asp333 is the 4-aspartylphosphate intermediate of the active site. Mg(2+) contacts are provided by Asp592 and Asp596. The chain crosses the membrane as a helical span at residues 648 to 669; the sequence is NYTIYAVSITIRIVLGFMLLAL. Residues 670-674 are Extracellular-facing; that stretch reads IWKFD. The chain crosses the membrane as a helical span at residues 675–697; sequence FPPFMVLIIAILNDGTIMTISKD. Over 698-713 the chain is Cytoplasmic; the sequence is RVKPSPLPDSWKLSEI. The helical transmembrane segment at 714–734 threads the bilayer; that stretch reads FATGVVFGSYMAMMTVIFFWA. Topologically, residues 735-759 are extracellular; that stretch reads AYKTDFFPRTFGVSTLEKTAHDDFR. Residues 760–780 traverse the membrane as a helical segment; it reads KLASAIYLQVSIISQALIFVT. Residues 781 to 792 lie on the Cytoplasmic side of the membrane; that stretch reads RSRSWSYVERPG. A helical membrane pass occupies residues 793–813; it reads MLLVVAFILAQLVATLIAVYA. Residues 814-821 lie on the Extracellular side of the membrane; the sequence is NWSFAAIE. A helical membrane pass occupies residues 822 to 842; sequence GIGWGWAGVIWLYNIVFYIPL. Residues 843–956 lie on the Cytoplasmic side of the membrane; sequence DIIKFLIRYA…IETIQQAYTV (114 aa). A Phosphothreonine modification is found at Thr889. Ser938 is subject to Phosphoserine. Positions 954–956 are interaction with 14-3-3 proteins; the sequence is YTV. Phosphothreonine is present on Thr955.

It belongs to the cation transport ATPase (P-type) (TC 3.A.3) family. Type IIIA subfamily. Binds to 14-3-3 proteins. The binding is induced by phosphorylation of Thr-955. Binding to 14-3-3 proteins activates the H(+)-ATPase. Expressed in guard cells, mesophyll cells, leaves and roots.

It is found in the membrane. It carries out the reaction ATP + H2O + H(+)(in) = ADP + phosphate + 2 H(+)(out). Its function is as follows. The plasma membrane H(+) ATPase of plants and fungi generates a proton gradient that drives the active transport of nutrients by H(+)-symport. The resulting external acidification and/or internal alkinization may mediate growth responses. This is ATPase 11, plasma membrane-type (AHA11) from Arabidopsis thaliana (Mouse-ear cress).